The sequence spans 186 residues: Ribosome-recycling factor (186 aa).

It belongs to the RRF family.

The protein resides in the cytoplasm. Its function is as follows. Responsible for the release of ribosomes from messenger RNA at the termination of protein biosynthesis. May increase the efficiency of translation by recycling ribosomes from one round of translation to another. The polypeptide is Ribosome-recycling factor (Chlorobaculum tepidum (strain ATCC 49652 / DSM 12025 / NBRC 103806 / TLS) (Chlorobium tepidum)).